Consider the following 382-residue polypeptide: D-galactonate dehydratase 1 (382 aa).

Aspartate 183 lines the Mg(2+) pocket. The active-site Proton donor is histidine 185. Mg(2+)-binding residues include glutamate 209 and glutamate 235. Histidine 285 serves as the catalytic Proton acceptor.

Belongs to the mandelate racemase/muconate lactonizing enzyme family. GalD subfamily. It depends on Mg(2+) as a cofactor.

The catalysed reaction is D-galactonate = 2-dehydro-3-deoxy-D-galactonate + H2O. It participates in carbohydrate acid metabolism; D-galactonate degradation; D-glyceraldehyde 3-phosphate and pyruvate from D-galactonate: step 1/3. In terms of biological role, catalyzes the dehydration of D-galactonate to 2-keto-3-deoxy-D-galactonate. This chain is D-galactonate dehydratase 1, found in Escherichia coli (strain SMS-3-5 / SECEC).